A 92-amino-acid polypeptide reads, in one-letter code: MPLSQEEKQRIINEFKTHETDTGSPEVQIALLTHRINELTEHLRVHKKDHHSRRGLLKMVGQRRALLVYLNKISPERYAKLIDRLNIRTVIR.

This sequence belongs to the universal ribosomal protein uS15 family. In terms of assembly, part of the 30S ribosomal subunit. Forms a bridge to the 50S subunit in the 70S ribosome, contacting the 23S rRNA.

One of the primary rRNA binding proteins, it binds directly to 16S rRNA where it helps nucleate assembly of the platform of the 30S subunit by binding and bridging several RNA helices of the 16S rRNA. Functionally, forms an intersubunit bridge (bridge B4) with the 23S rRNA of the 50S subunit in the ribosome. The polypeptide is Small ribosomal subunit protein uS15 (Symbiobacterium thermophilum (strain DSM 24528 / JCM 14929 / IAM 14863 / T)).